We begin with the raw amino-acid sequence, 313 residues long: Protoheme IX farnesyltransferase (313 aa).

Helical transmembrane passes span 23 to 43 (ILAY…VTTI), 56 to 76 (PLLI…ANTL), 107 to 127 (LIFG…TANL), 128 to 148 (LSGL…TLVL), 155 to 175 (NVVW…SAVT), 182 to 202 (ALVM…ALAM), 243 to 263 (LALA…VWFL), and 291 to 311 (YLAV…PTLF).

The protein belongs to the UbiA prenyltransferase family. Protoheme IX farnesyltransferase subfamily.

It is found in the cell membrane. It carries out the reaction heme b + (2E,6E)-farnesyl diphosphate + H2O = Fe(II)-heme o + diphosphate. The protein operates within porphyrin-containing compound metabolism; heme O biosynthesis; heme O from protoheme: step 1/1. Functionally, converts heme B (protoheme IX) to heme O by substitution of the vinyl group on carbon 2 of heme B porphyrin ring with a hydroxyethyl farnesyl side group. The chain is Protoheme IX farnesyltransferase from Mycobacteroides abscessus (strain ATCC 19977 / DSM 44196 / CCUG 20993 / CIP 104536 / JCM 13569 / NCTC 13031 / TMC 1543 / L948) (Mycobacterium abscessus).